A 1131-amino-acid polypeptide reads, in one-letter code: Phytochrome a (1131 aa).

Residues 1–23 (MSSSRPAHSSSSSSRTRQSSQAR) are compositionally biased toward low complexity. Positions 1-26 (MSSSRPAHSSSSSSRTRQSSQARILA) are disordered. The GAF domain maps to 219-404 (SMEALCNTVV…VFAVHVNKEF (186 aa)). A phytochromobilin-binding site is contributed by C324. 2 consecutive PAS domains span residues 620–690 (VTSE…LQGK) and 750–834 (VEGD…LAGE). The Histidine kinase domain occupies 904–1124 (YMRHAINKPL…TFILTAELAA (221 aa)).

Belongs to the phytochrome family. In terms of assembly, homodimer. In terms of processing, contains one covalently linked phytochromobilin chromophore.

Regulatory photoreceptor which exists in two forms that are reversibly interconvertible by light: the Pr form that absorbs maximally in the red region of the spectrum and the Pfr form that absorbs maximally in the far-red region. Photoconversion of Pr to Pfr induces an array of morphogenic responses, whereas reconversion of Pfr to Pr cancels the induction of those responses. Pfr controls the expression of a number of nuclear genes including those encoding the small subunit of ribulose-bisphosphate carboxylase, chlorophyll A/B binding protein, protochlorophyllide reductase, rRNA, etc. It also controls the expression of its own gene(s) in a negative feedback fashion. The protein is Phytochrome a (PHYA) of Sorghum bicolor (Sorghum).